The chain runs to 536 residues: CTP synthase (536 aa).

The tract at residues 1-266 (MKTKFIFVTG…DEQVVEKLNI (266 aa)) is amidoligase domain. A CTP-binding site is contributed by S14. UTP is bound at residue S14. ATP-binding positions include 15 to 20 (SIGKGL) and D72. Residues D72 and E140 each contribute to the Mg(2+) site. CTP contacts are provided by residues 147–149 (DIE), 187–192 (KTKPTQ), and K223. Residues 187–192 (KTKPTQ) and K223 contribute to the UTP site. One can recognise a Glutamine amidotransferase type-1 domain in the interval 292 to 534 (RIAIVGKYVN…IAAALDRKDK (243 aa)). L-glutamine is bound at residue G354. C381 (nucleophile; for glutamine hydrolysis) is an active-site residue. L-glutamine is bound by residues 382–385 (LGMQ), E405, and R462. Catalysis depends on residues H507 and E509.

It belongs to the CTP synthase family. Homotetramer.

The catalysed reaction is UTP + L-glutamine + ATP + H2O = CTP + L-glutamate + ADP + phosphate + 2 H(+). It catalyses the reaction L-glutamine + H2O = L-glutamate + NH4(+). It carries out the reaction UTP + NH4(+) + ATP = CTP + ADP + phosphate + 2 H(+). It functions in the pathway pyrimidine metabolism; CTP biosynthesis via de novo pathway; CTP from UDP: step 2/2. Its activity is regulated as follows. Allosterically activated by GTP, when glutamine is the substrate; GTP has no effect on the reaction when ammonia is the substrate. The allosteric effector GTP functions by stabilizing the protein conformation that binds the tetrahedral intermediate(s) formed during glutamine hydrolysis. Inhibited by the product CTP, via allosteric rather than competitive inhibition. Catalyzes the ATP-dependent amination of UTP to CTP with either L-glutamine or ammonia as the source of nitrogen. Regulates intracellular CTP levels through interactions with the four ribonucleotide triphosphates. The chain is CTP synthase from Geobacter sulfurreducens (strain ATCC 51573 / DSM 12127 / PCA).